We begin with the raw amino-acid sequence, 205 residues long: Superoxide dismutase [Fe] (205 aa).

Fe cation-binding residues include His-33, His-81, Asp-167, and His-171.

It belongs to the iron/manganese superoxide dismutase family. As to quaternary structure, homotetramer. It depends on Fe cation as a cofactor.

It carries out the reaction 2 superoxide + 2 H(+) = H2O2 + O2. In terms of biological role, destroys superoxide anion radicals which are normally produced within the cells and which are toxic to biological systems. The protein is Superoxide dismutase [Fe] (sod) of Methanothermobacter thermautotrophicus (strain ATCC 29096 / DSM 1053 / JCM 10044 / NBRC 100330 / Delta H) (Methanobacterium thermoautotrophicum).